A 380-amino-acid chain; its full sequence is Chaperone protein DnaJ (380 aa).

A J domain is found at 5-70; it reads DFYETLGVSK…QKRAAYDRFG (66 aa). The segment at 141 to 219 adopts a CR-type zinc-finger fold; sequence GKTAQIRVPT…CHGQGRVTEE (79 aa). Zn(2+) is bound by residues Cys-154, Cys-157, Cys-171, Cys-174, Cys-193, Cys-196, Cys-207, and Cys-210. 4 CXXCXGXG motif repeats span residues 154 to 161, 171 to 178, 193 to 200, and 207 to 214; these read CEVCSGSG, CATCQGSG, CPTCQGRG, and CGKCHGQG.

This sequence belongs to the DnaJ family. Homodimer. It depends on Zn(2+) as a cofactor.

Its subcellular location is the cytoplasm. Its function is as follows. Participates actively in the response to hyperosmotic and heat shock by preventing the aggregation of stress-denatured proteins and by disaggregating proteins, also in an autonomous, DnaK-independent fashion. Unfolded proteins bind initially to DnaJ; upon interaction with the DnaJ-bound protein, DnaK hydrolyzes its bound ATP, resulting in the formation of a stable complex. GrpE releases ADP from DnaK; ATP binding to DnaK triggers the release of the substrate protein, thus completing the reaction cycle. Several rounds of ATP-dependent interactions between DnaJ, DnaK and GrpE are required for fully efficient folding. Also involved, together with DnaK and GrpE, in the DNA replication of plasmids through activation of initiation proteins. The polypeptide is Chaperone protein DnaJ (Allorhizobium ampelinum (strain ATCC BAA-846 / DSM 112012 / S4) (Agrobacterium vitis (strain S4))).